A 144-amino-acid chain; its full sequence is Transcriptional regulator MraZ (144 aa).

SpoVT-AbrB domains are found at residues 5–47 and 76–119; these read EYDH…TLDE and AVEV…DRET.

It belongs to the MraZ family. In terms of assembly, forms oligomers.

The protein resides in the cytoplasm. It is found in the nucleoid. This Staphylococcus aureus protein is Transcriptional regulator MraZ.